Reading from the N-terminus, the 219-residue chain is Phosphatidylserine decarboxylase proenzyme (219 aa).

Ser182 acts as the Schiff-base intermediate with substrate; via pyruvic acid in catalysis. Residue Ser182 is modified to Pyruvic acid (Ser); by autocatalysis.

The protein belongs to the phosphatidylserine decarboxylase family. PSD-A subfamily. Heterodimer of a large membrane-associated beta subunit and a small pyruvoyl-containing alpha subunit. Pyruvate is required as a cofactor. In terms of processing, is synthesized initially as an inactive proenzyme. Formation of the active enzyme involves a self-maturation process in which the active site pyruvoyl group is generated from an internal serine residue via an autocatalytic post-translational modification. Two non-identical subunits are generated from the proenzyme in this reaction, and the pyruvate is formed at the N-terminus of the alpha chain, which is derived from the carboxyl end of the proenzyme. The post-translation cleavage follows an unusual pathway, termed non-hydrolytic serinolysis, in which the side chain hydroxyl group of the serine supplies its oxygen atom to form the C-terminus of the beta chain, while the remainder of the serine residue undergoes an oxidative deamination to produce ammonia and the pyruvoyl prosthetic group on the alpha chain.

Its subcellular location is the cell membrane. The catalysed reaction is a 1,2-diacyl-sn-glycero-3-phospho-L-serine + H(+) = a 1,2-diacyl-sn-glycero-3-phosphoethanolamine + CO2. It participates in phospholipid metabolism; phosphatidylethanolamine biosynthesis; phosphatidylethanolamine from CDP-diacylglycerol: step 2/2. Catalyzes the formation of phosphatidylethanolamine (PtdEtn) from phosphatidylserine (PtdSer). This chain is Phosphatidylserine decarboxylase proenzyme, found in Chlorobium phaeovibrioides (strain DSM 265 / 1930) (Prosthecochloris vibrioformis (strain DSM 265)).